We begin with the raw amino-acid sequence, 212 residues long: ATP phosphoribosyltransferase (212 aa).

It belongs to the ATP phosphoribosyltransferase family. Short subfamily. As to quaternary structure, heteromultimer composed of HisG and HisZ subunits.

It is found in the cytoplasm. The enzyme catalyses 1-(5-phospho-beta-D-ribosyl)-ATP + diphosphate = 5-phospho-alpha-D-ribose 1-diphosphate + ATP. It functions in the pathway amino-acid biosynthesis; L-histidine biosynthesis; L-histidine from 5-phospho-alpha-D-ribose 1-diphosphate: step 1/9. Functionally, catalyzes the condensation of ATP and 5-phosphoribose 1-diphosphate to form N'-(5'-phosphoribosyl)-ATP (PR-ATP). Has a crucial role in the pathway because the rate of histidine biosynthesis seems to be controlled primarily by regulation of HisG enzymatic activity. The polypeptide is ATP phosphoribosyltransferase (Clostridium botulinum (strain ATCC 19397 / Type A)).